The sequence spans 365 residues: 3-amino-4-hydroxybenzoate 4-O-methyltransferase (365 aa).

Positions 1 to 18 are enriched in polar residues; that stretch reads MTVPENAQHTAPDQTQHT. The disordered stretch occupies residues 1 to 32; sequence MTVPENAQHTAPDQTQHTAPDRTRQAQQAAPD. Residues aspartate 227, 253 to 255, and arginine 270 each bind S-adenosyl-L-methionine; that span reads GDF. Histidine 273 functions as the Proton acceptor in the catalytic mechanism.

It belongs to the class I-like SAM-binding methyltransferase superfamily. Cation-independent O-methyltransferase family.

The catalysed reaction is 3-amino-2,4-dihydroxybenzoate + S-adenosyl-L-methionine = 3-amino-2-hydroxy-4-methoxybenzoate + S-adenosyl-L-homocysteine + H(+). It functions in the pathway antibiotic biosynthesis. Part of a gene cluster involved in the biosynthesis of cremeomycin, a light-sensitive o-diazoquinone with antibacterial and antiproliferative effects. Catalyzes the methylation of the C4 hydroxyl group of 3-amino-2,4-dihydroxybenzoate (3,2,4-ADHBA) to form 3-amino-2-hydroxy-4-methoxybenzoate (3,2,4-AHMBA). In vitro, can also catalyze the methylation of 3-amino-4-hydroxybenzoate (3,4-AHBA). This is 3-amino-4-hydroxybenzoate 4-O-methyltransferase from Streptomyces cremeus.